The chain runs to 242 residues: Large ribosomal subunit protein uL1 (242 aa).

The protein belongs to the universal ribosomal protein uL1 family. As to quaternary structure, part of the 50S ribosomal subunit.

Functionally, binds directly to 23S rRNA. The L1 stalk is quite mobile in the ribosome, and is involved in E site tRNA release. Its function is as follows. Protein L1 is also a translational repressor protein, it controls the translation of the L11 operon by binding to its mRNA. This Kitasatospora aureofaciens (Streptomyces aureofaciens) protein is Large ribosomal subunit protein uL1.